The primary structure comprises 469 residues: ATP synthase subunit beta (469 aa).

156–163 (GGAGVGKT) is a binding site for ATP.

The protein belongs to the ATPase alpha/beta chains family. As to quaternary structure, F-type ATPases have 2 components, CF(1) - the catalytic core - and CF(0) - the membrane proton channel. CF(1) has five subunits: alpha(3), beta(3), gamma(1), delta(1), epsilon(1). CF(0) has three main subunits: a(1), b(2) and c(9-12). The alpha and beta chains form an alternating ring which encloses part of the gamma chain. CF(1) is attached to CF(0) by a central stalk formed by the gamma and epsilon chains, while a peripheral stalk is formed by the delta and b chains.

The protein localises to the cell membrane. The catalysed reaction is ATP + H2O + 4 H(+)(in) = ADP + phosphate + 5 H(+)(out). In terms of biological role, produces ATP from ADP in the presence of a proton gradient across the membrane. The catalytic sites are hosted primarily by the beta subunits. The polypeptide is ATP synthase subunit beta (Lactococcus lactis subsp. cremoris (strain MG1363)).